Consider the following 513-residue polypeptide: Protein phosphatase 1H (513 aa).

Phosphoserine is present on serine 7. One can recognise a PPM-type phosphatase domain in the interval 77 to 506; that stretch reads ATGYAEVINA…DDISVYVIPL (430 aa). The segment at 109-133 is disordered; the sequence is TITSTPNRNSKRRSSLPNGEGLQLK. Residue threonine 113 is modified to Phosphothreonine. Phosphoserine occurs at positions 123 and 210. Arginine 212 is modified (omega-N-methylarginine). Serine 220 bears the Phosphoserine mark. The residue at position 223 (threonine 223) is a Phosphothreonine. Serine 421 is modified (phosphoserine).

This sequence belongs to the PP2C family.

It localises to the nucleus. The protein localises to the cytoplasm. The enzyme catalyses O-phospho-L-seryl-[protein] + H2O = L-seryl-[protein] + phosphate. It carries out the reaction O-phospho-L-threonyl-[protein] + H2O = L-threonyl-[protein] + phosphate. Dephosphorylates CDKN1B at 'Thr-187', thus removing a signal for proteasomal degradation. This chain is Protein phosphatase 1H (Ppm1h), found in Mus musculus (Mouse).